Reading from the N-terminus, the 278-residue chain is Protein irg-2 (278 aa).

The segment at 152–179 (NSIRGQPFKSLQPENRTPTQVTGHQQES) is disordered. Over residues 163 to 179 (QPENRTPTQVTGHQQES) the composition is skewed to polar residues.

Its function is as follows. Plays a role in innate immunity by conferring resistance to virulent strains of the Gram-negative bacterium P.aeruginosa via the zip-2 pathway and independent of the pmk-1 p38MAPK pathway. Induced as part of several immune responses to translational inhibition arising from endocytosis of ToxA during P.aeruginosa infection or exposure to exogenous cycloheximide. The polypeptide is Protein irg-2 (Caenorhabditis elegans).